The sequence spans 138 residues: MVMQRTFVMIKPDGVKRGLIGEIISRFEKRGLKIVSLKMVKMSRDIAEKLYDEHKGKSFFEELVNYVTSGPVVCMVIEGDDVVQVIRRMIGNTDPKEAPPGTIRGDYALSKSENVIHASDSIEKAQREMSLFFDKSDL.

ATP-binding residues include K11, F59, R87, T93, R104, and N114. H117 functions as the Pros-phosphohistidine intermediate in the catalytic mechanism.

The protein belongs to the NDK family. Mg(2+) is required as a cofactor.

The protein resides in the cytoplasm. The enzyme catalyses a 2'-deoxyribonucleoside 5'-diphosphate + ATP = a 2'-deoxyribonucleoside 5'-triphosphate + ADP. It catalyses the reaction a ribonucleoside 5'-diphosphate + ATP = a ribonucleoside 5'-triphosphate + ADP. In terms of biological role, major role in the synthesis of nucleoside triphosphates other than ATP. The ATP gamma phosphate is transferred to the NDP beta phosphate via a ping-pong mechanism, using a phosphorylated active-site intermediate. This chain is Nucleoside diphosphate kinase, found in Saccharolobus islandicus (strain Y.N.15.51 / Yellowstone #2) (Sulfolobus islandicus).